A 97-amino-acid chain; its full sequence is Co-chaperonin GroES (97 aa).

Belongs to the GroES chaperonin family. In terms of assembly, heptamer of 7 subunits arranged in a ring. Interacts with the chaperonin GroEL.

The protein resides in the cytoplasm. Functionally, together with the chaperonin GroEL, plays an essential role in assisting protein folding. The GroEL-GroES system forms a nano-cage that allows encapsulation of the non-native substrate proteins and provides a physical environment optimized to promote and accelerate protein folding. GroES binds to the apical surface of the GroEL ring, thereby capping the opening of the GroEL channel. This chain is Co-chaperonin GroES, found in Nocardioides sp. (strain ATCC BAA-499 / JS614).